Consider the following 359-residue polypeptide: UPF0283 membrane protein RHE_CH02332 (359 aa).

The disordered stretch occupies residues 1 to 61 (MSKPPSDLPR…EDPFINPDRD (61 aa)). 2 helical membrane-spanning segments follow: residues 77-97 (FGKIALAAFGILLSLGIGLWT) and 111-131 (LGYAALGVLAIGILAVLALVI).

It belongs to the UPF0283 family.

It localises to the cell inner membrane. The protein is UPF0283 membrane protein RHE_CH02332 of Rhizobium etli (strain ATCC 51251 / DSM 11541 / JCM 21823 / NBRC 15573 / CFN 42).